The chain runs to 1614 residues: Low-density lipoprotein receptor-related protein 5 (1614 aa).

The first 30 residues, 1-30 (METAPTRAPPPPPPPLLLLVLYCSLVPAAA), serve as a signal peptide directing secretion. Residues 31–287 (SPLLLFANRR…YSPMDIQVLS (257 aa)) are beta-propeller 1. The Extracellular segment spans residues 31-1383 (SPLLLFANRR…PPSDDIPAHS (1353 aa)). 5 LDL-receptor class B repeats span residues 74-118 (GAVY…DWVG), 119-161 (KKLY…DPAH), 162-205 (GYMY…DLEE), 206-246 (QKLY…TLSG), and 247-289 (DTLY…LSQE). N-linked (GlcNAc...) asparagine glycosylation is found at Asn-92 and Asn-137. The 43-residue stretch at 294–336 (FHTPCEEDNGGCSHLCLLSPREPFYSCACPTGVQLQDNGKTCK) folds into the EGF-like 1 domain. Cystine bridges form between Cys-298-Cys-309, Cys-305-Cys-320, and Cys-322-Cys-335. Positions 340–601 (EEVLLLARRT…AVNVAKVVGT (262 aa)) are beta-propeller 2. LDL-receptor class B repeat units lie at residues 384–426 (GYVY…DWVA), 427–469 (RNLY…HPVM), 470–513 (GLMY…DLQE), 514–556 (GKLY…LGDF), and 557–599 (IYWT…AKVV). N-linked (GlcNAc...) asparagine glycosylation is found at Asn-445 and Asn-498. Positions 600–640 (GTNPCADGNGGCSHLCFFTPRATKCGCPIGLELLSDMKTCI) constitute an EGF-like 2 domain. Intrachain disulfides connect Cys-604–Cys-615, Cys-611–Cys-624, and Cys-626–Cys-639. Positions 643–902 (EAFLVFTSRA…VFHSSRQDGL (260 aa)) are beta-propeller 3. LDL-receptor class B repeat units lie at residues 686–728 (NHIY…DWMG), 729–771 (KNLY…DPTK), 772–814 (GYIY…DYAD), 815–854 (QRLY…TQYS), and 855–897 (DYIY…FHSS). N-linked (GlcNAc...) asparagine glycosylation occurs at Asn-704. N-linked (GlcNAc...) asparagine glycosylation occurs at Asn-877. One can recognise an EGF-like 3 domain in the interval 901 to 941 (GLNDCVHSNGQCGQLCLAIPGGHRCGCASHYTLDPSSRNCS). Disulfide bonds link Cys-905–Cys-916, Cys-912–Cys-925, and Cys-927–Cys-940. The interval 944–1211 (STFLLFSQKF…AVEEVSLEEF (268 aa)) is beta-propeller 4. LDL-receptor class B repeat units follow at residues 988-1034 (KFIY…DIYS), 1035-1077 (RTLF…NAER), 1078-1122 (GYMY…DNAL), 1123-1164 (GKLF…VLGR), and 1165-1206 (HLYW…VEEV). Residues 1002–1025 (AKDDGTQPSMLTSPSQSLSPDRQP) are disordered. Residues 1007-1021 (TQPSMLTSPSQSLSP) are compositionally biased toward polar residues. In terms of domain architecture, EGF-like 4 spans 1212 to 1253 (SAHPCARDNGGCSHICIAKGDGTPRCSCPVHLVLLQNLLTCG). 12 cysteine pairs are disulfide-bonded: Cys-1216/Cys-1227, Cys-1223/Cys-1237, Cys-1239/Cys-1252, Cys-1258/Cys-1272, Cys-1265/Cys-1285, Cys-1279/Cys-1294, Cys-1297/Cys-1309, Cys-1304/Cys-1322, Cys-1316/Cys-1331, Cys-1335/Cys-1347, Cys-1342/Cys-1360, and Cys-1354/Cys-1369. LDL-receptor class A domains follow at residues 1257 to 1295 (TCSP…EGCP), 1296 to 1332 (VCSA…ANCD), and 1334 to 1370 (VCLP…LMCE). A helical membrane pass occupies residues 1384 to 1406 (SAIGPVIGIILSLFVMGGVYFVC). The Cytoplasmic segment spans residues 1407 to 1614 (QRVMCQRYTG…PPPSPCTDSS (208 aa)). The segment at 1474–1498 (RNHVTGASSSSSSSTKATLYPPILN) is disordered. Residues 1499 to 1505 (PPPSPAT) carry the PPPSP motif A motif. The PPPSP motif B signature appears at 1537 to 1544 (PPTTPCST). The segment at 1567–1599 (SDSDPYPPPPTPHSQYLSAEDSCPPSPGTERSY) is disordered. The PPPSP motif C signature appears at 1573–1580 (PPPPTPHS). The short motif at 1590-1595 (PPSPGT) is the PPPSP motif D element. Residues 1604 to 1611 (PPPPSPCT) carry the PPPSP motif E motif.

Belongs to the LDLR family. In terms of assembly, homodimer; disulfide-linked. Forms phosphorylated oligomer aggregates on Wnt-signaling. Component of a WNT-signaling complex that contains a WNT protein, a FZD protein and LRP5 or LRP6. Interacts with FZD8; the interaction is formed on WNT-binding and signaling. Interacts (via the phosphorylated PPPSP motif domains) with AXIN1; the interaction prevents inhibition of beta-catenin phosphorylation and signaling and is enhanced in the presence of GSK3B and WNT1 or WNT3A. Interacts (via beta-propeller regions 3 and 4) with DKK1; the interaction, enhanced by MESD and/or KREMEN, inhibits beta-catenin signaling by preventing GSK3-mediated phosphorylation of the PPPSP motifs and subsequent, AXIN1 binding. Interacts with CSNK1E. Interacts with SOST; the interaction antagonizes canonical Wnt signaling. Interacts with APCDD1. Interacts with MESD; the interaction prevents the formation of LRP5 aggregates, targets LRP5 to the plasma membrane and, when complexed with KREMEN2, increases DKK1 binding. Interacts with CAPRIN2. In terms of processing, phosphorylation of cytoplasmic PPPSP motifs regulates the signal transduction of the Wnt signaling pathway through acting as a docking site for AXIN1. As to expression, widely expressed, with the highest expression levels in liver, heart, and lung and the lowest levels in brain and spleen.

It localises to the membrane. The protein resides in the endoplasmic reticulum. Functionally, acts as a coreceptor with members of the frizzled family of seven-transmembrane spanning receptors to transduce signal by Wnt proteins. Activates the canonical Wnt signaling pathway that controls cell fate determination and self-renewal during embryonic development and adult tissue regeneration. In particular, may play an important role in the development of the posterior patterning of the epiblast during gastrulation. During bone development, regulates osteoblast proliferation and differentiation thus determining bone mass. Mechanistically, the formation of the signaling complex between Wnt ligand, frizzled receptor and LRP5 coreceptor promotes the recruitment of AXIN1 to LRP5, stabilizing beta-catenin/CTNNB1 and activating TCF/LEF-mediated transcriptional programs. Acts as a coreceptor for non-Wnt proteins, such as norrin/NDP. Binding of norrin/NDP to frizzled 4/FZD4-LRP5 receptor complex triggers beta-catenin/CTNNB1-dependent signaling known to be required for retinal vascular development. Plays a role in controlling postnatal vascular regression in retina via macrophage-induced endothelial cell apoptosis. In Mus musculus (Mouse), this protein is Low-density lipoprotein receptor-related protein 5.